A 457-amino-acid chain; its full sequence is Autophagy-related protein 14 (457 aa).

Residues 31–109 (RIENVMALIE…TRRAALSRRK (79 aa)) are a coiled coil. 3 disordered regions span residues 54–73 (ETNA…QRTA), 252–274 (PSQA…VSRP), and 433–457 (NKNL…VKNR). A compositionally biased stretch (low complexity) spans 253-266 (SQASVSSPSSTTDT).

Belongs to the ATG14 family. As to quaternary structure, component of the autophagy-specific VPS34 PI3-kinase complex I.

It localises to the preautophagosomal structure membrane. It is found in the vacuole membrane. Its function is as follows. Required for cytoplasm to vacuole transport (Cvt) and autophagy as a part of the autophagy-specific VPS34 PI3-kinase complex I. This complex is essential to recruit the ATG8-phosphatidylinositol conjugate and the ATG12-ATG5 conjugate to the pre-autophagosomal structure. ATG14 mediates the specific binding of the VPS34 PI3-kinase complex I to the preautophagosomal structure (PAS). Autophagy is required for proper vegetative growth, asexual/sexual reproduction, and full virulence. Autophagy is particularly involved in the biosynthesis of deoxynivalenol (DON), an important virulence determinant. In Gibberella zeae (strain ATCC MYA-4620 / CBS 123657 / FGSC 9075 / NRRL 31084 / PH-1) (Wheat head blight fungus), this protein is Autophagy-related protein 14.